Here is a 298-residue protein sequence, read N- to C-terminus: MQTQRLRIAIQKKGRLSKESQALLKKCGVKFNVMGERLVVHSENMPIDLLLVRDDDIPGLIMDGVVDLGFIGENELEEVRLDRKALGEPYEFVQLRRLDFGGCRLSIAIDKDEEYNGPQDLAGKRIATTYPQLLKAYMDEVGVPFSTCMLTGSVEVAPRAGLADAIADLVSTGATLEANGLKEAEIIFKSKATLIQRTGEFDADKVALIEKLLTRMQGVQQAKESKYIMLHAPAEKLDQIKALLPGAEDPTVLPLSADKQKVAVHLVSTENLFWETMEQLKELGASSILVLPIEKMME.

This sequence belongs to the ATP phosphoribosyltransferase family. Long subfamily. Mg(2+) serves as cofactor.

Its subcellular location is the cytoplasm. It carries out the reaction 1-(5-phospho-beta-D-ribosyl)-ATP + diphosphate = 5-phospho-alpha-D-ribose 1-diphosphate + ATP. It participates in amino-acid biosynthesis; L-histidine biosynthesis; L-histidine from 5-phospho-alpha-D-ribose 1-diphosphate: step 1/9. Its activity is regulated as follows. Feedback inhibited by histidine. In terms of biological role, catalyzes the condensation of ATP and 5-phosphoribose 1-diphosphate to form N'-(5'-phosphoribosyl)-ATP (PR-ATP). Has a crucial role in the pathway because the rate of histidine biosynthesis seems to be controlled primarily by regulation of HisG enzymatic activity. The chain is ATP phosphoribosyltransferase from Vibrio campbellii (strain ATCC BAA-1116).